The following is a 98-amino-acid chain: Aspartyl/glutamyl-tRNA(Asn/Gln) amidotransferase subunit C (98 aa).

The disordered stretch occupies residues 75–98 (AQALSGAPAQEQQRFKVPQILGED).

This sequence belongs to the GatC family. Heterotrimer of A, B and C subunits.

The enzyme catalyses L-glutamyl-tRNA(Gln) + L-glutamine + ATP + H2O = L-glutaminyl-tRNA(Gln) + L-glutamate + ADP + phosphate + H(+). It carries out the reaction L-aspartyl-tRNA(Asn) + L-glutamine + ATP + H2O = L-asparaginyl-tRNA(Asn) + L-glutamate + ADP + phosphate + 2 H(+). Allows the formation of correctly charged Asn-tRNA(Asn) or Gln-tRNA(Gln) through the transamidation of misacylated Asp-tRNA(Asn) or Glu-tRNA(Gln) in organisms which lack either or both of asparaginyl-tRNA or glutaminyl-tRNA synthetases. The reaction takes place in the presence of glutamine and ATP through an activated phospho-Asp-tRNA(Asn) or phospho-Glu-tRNA(Gln). This is Aspartyl/glutamyl-tRNA(Asn/Gln) amidotransferase subunit C from Streptomyces griseus subsp. griseus (strain JCM 4626 / CBS 651.72 / NBRC 13350 / KCC S-0626 / ISP 5235).